Consider the following 227-residue polypeptide: Phosphoglycolate phosphatase (227 aa).

D11 serves as the catalytic Nucleophile. Mg(2+)-binding residues include D11, D13, and D176.

The protein belongs to the HAD-like hydrolase superfamily. CbbY/CbbZ/Gph/YieH family. It depends on Mg(2+) as a cofactor.

It carries out the reaction 2-phosphoglycolate + H2O = glycolate + phosphate. Its pathway is organic acid metabolism; glycolate biosynthesis; glycolate from 2-phosphoglycolate: step 1/1. Specifically catalyzes the dephosphorylation of 2-phosphoglycolate. Is involved in the dissimilation of the intracellular 2-phosphoglycolate formed during the DNA repair of 3'-phosphoglycolate ends, a major class of DNA lesions induced by oxidative stress. The polypeptide is Phosphoglycolate phosphatase (Aliivibrio fischeri (strain ATCC 700601 / ES114) (Vibrio fischeri)).